A 377-amino-acid chain; its full sequence is Succinyl-diaminopimelate desuccinylase (377 aa).

Histidine 68 provides a ligand contact to Zn(2+). The active site involves aspartate 70. Aspartate 101 contributes to the Zn(2+) binding site. The active-site Proton acceptor is the glutamate 135. Positions 136, 164, and 350 each coordinate Zn(2+).

It belongs to the peptidase M20A family. DapE subfamily. Homodimer. Requires Zn(2+) as cofactor. Co(2+) is required as a cofactor.

The enzyme catalyses N-succinyl-(2S,6S)-2,6-diaminopimelate + H2O = (2S,6S)-2,6-diaminopimelate + succinate. The protein operates within amino-acid biosynthesis; L-lysine biosynthesis via DAP pathway; LL-2,6-diaminopimelate from (S)-tetrahydrodipicolinate (succinylase route): step 3/3. In terms of biological role, catalyzes the hydrolysis of N-succinyl-L,L-diaminopimelic acid (SDAP), forming succinate and LL-2,6-diaminopimelate (DAP), an intermediate involved in the bacterial biosynthesis of lysine and meso-diaminopimelic acid, an essential component of bacterial cell walls. The sequence is that of Succinyl-diaminopimelate desuccinylase from Aliivibrio fischeri (strain ATCC 700601 / ES114) (Vibrio fischeri).